Reading from the N-terminus, the 492-residue chain is Bifunctional purine biosynthesis protein PurH (492 aa).

Residues Met-1–Val-144 enclose the MGS-like domain.

It belongs to the PurH family.

The enzyme catalyses (6R)-10-formyltetrahydrofolate + 5-amino-1-(5-phospho-beta-D-ribosyl)imidazole-4-carboxamide = 5-formamido-1-(5-phospho-D-ribosyl)imidazole-4-carboxamide + (6S)-5,6,7,8-tetrahydrofolate. It catalyses the reaction IMP + H2O = 5-formamido-1-(5-phospho-D-ribosyl)imidazole-4-carboxamide. Its pathway is purine metabolism; IMP biosynthesis via de novo pathway; 5-formamido-1-(5-phospho-D-ribosyl)imidazole-4-carboxamide from 5-amino-1-(5-phospho-D-ribosyl)imidazole-4-carboxamide (10-formyl THF route): step 1/1. The protein operates within purine metabolism; IMP biosynthesis via de novo pathway; IMP from 5-formamido-1-(5-phospho-D-ribosyl)imidazole-4-carboxamide: step 1/1. This is Bifunctional purine biosynthesis protein PurH from Macrococcus caseolyticus (strain JCSC5402) (Macrococcoides caseolyticum).